Reading from the N-terminus, the 252-residue chain is 5-oxoprolinase subunit A (252 aa).

This sequence belongs to the LamB/PxpA family. In terms of assembly, forms a complex composed of PxpA, PxpB and PxpC.

It catalyses the reaction 5-oxo-L-proline + ATP + 2 H2O = L-glutamate + ADP + phosphate + H(+). Its function is as follows. Catalyzes the cleavage of 5-oxoproline to form L-glutamate coupled to the hydrolysis of ATP to ADP and inorganic phosphate. The sequence is that of 5-oxoprolinase subunit A from Bacillus cytotoxicus (strain DSM 22905 / CIP 110041 / 391-98 / NVH 391-98).